The following is a 268-amino-acid chain: Cytochrome b-c1 complex subunit Rieske-3, mitochondrial (268 aa).

The N-terminal 56 residues, 1 to 56 (MLRIAGRKLSSSAATRSSSAFFTRNPFTFTDDSSSPARSPSPASLASQFLDQFRGF), are a transit peptide targeting the mitochondrion. Residues 57–105 (SSNSVSPAHQTGLVSDLPATVAAIKNPSSKIVYDDSNHERYPPGDPSKR) are Mitochondrial matrix-facing. A helical membrane pass occupies residues 106–128 (AFAYFVLTGGRFVYASLVRLLIL). Residues 129–268 (KFVLSMSASK…FMEENKLLIG (140 aa)) lie on the Mitochondrial intermembrane side of the membrane. In terms of domain architecture, Rieske spans 178–266 (INLANSVDLG…YSFMEENKLL (89 aa)). 4 residues coordinate [2Fe-2S] cluster: Cys-211, His-213, Cys-230, and His-233. The cysteines at positions 216 and 232 are disulfide-linked.

This sequence belongs to the Rieske iron-sulfur protein family. Component of the ubiquinol-cytochrome c oxidoreductase (cytochrome b-c1 complex, complex III, CIII), a multisubunit enzyme composed of 3 respiratory subunits cytochrome b, cytochrome c1 and Rieske protein, 2 core protein subunits, and several low-molecular weight protein subunits. The complex exists as an obligatory dimer and forms supercomplexes (SCs) in the inner mitochondrial membrane with cytochrome c oxidase (complex IV, CIV). Requires [2Fe-2S] cluster as cofactor. As to expression, high levels are seen in the flowers while a low level expression is seen in the roots, leaves and stems.

The protein resides in the mitochondrion inner membrane. It carries out the reaction a quinol + 2 Fe(III)-[cytochrome c](out) = a quinone + 2 Fe(II)-[cytochrome c](out) + 2 H(+)(out). Its function is as follows. Component of the ubiquinol-cytochrome c oxidoreductase, a multisubunit transmembrane complex that is part of the mitochondrial electron transport chain which drives oxidative phosphorylation. The respiratory chain contains 3 multisubunit complexes succinate dehydrogenase (complex II, CII), ubiquinol-cytochrome c oxidoreductase (cytochrome b-c1 complex, complex III, CIII) and cytochrome c oxidase (complex IV, CIV), that cooperate to transfer electrons derived from NADH and succinate to molecular oxygen, creating an electrochemical gradient over the inner membrane that drives transmembrane transport and the ATP synthase. The cytochrome b-c1 complex catalyzes electron transfer from ubiquinol to cytochrome c, linking this redox reaction to translocation of protons across the mitochondrial inner membrane, with protons being carried across the membrane as hydrogens on the quinol. In the process called Q cycle, 2 protons are consumed from the matrix, 4 protons are released into the intermembrane space and 2 electrons are passed to cytochrome c. The Rieske protein is a catalytic core subunit containing a [2Fe-2S] iron-sulfur cluster. It cycles between 2 conformational states during catalysis to transfer electrons from the quinol bound in the Q(0) site in cytochrome b to cytochrome c1. The chain is Cytochrome b-c1 complex subunit Rieske-3, mitochondrial from Nicotiana tabacum (Common tobacco).